The sequence spans 717 residues: Polyribonucleotide nucleotidyltransferase (717 aa).

The Mg(2+) site is built by D486 and D492. Residues 553–612 (PKIIQLQIDIDKISLVIGSTGKTVKAITDEFEVRVQIEQDGRITLFGTDSLKMQKAKARI) form the KH domain. Positions 622 to 715 (GEIYEGVVKK…KFGKIELELV (94 aa)) constitute an S1 motif domain. Residues 650–683 (SNRPKSRDDRYGDMRHSRYGSGRHSRYGRDSRNT) form a disordered region. The segment covering 654 to 665 (KSRDDRYGDMRH) has biased composition (basic and acidic residues). The span at 666–675 (SRYGSGRHSR) shows a compositional bias: basic residues.

Belongs to the polyribonucleotide nucleotidyltransferase family. Mg(2+) is required as a cofactor.

It is found in the cytoplasm. The catalysed reaction is RNA(n+1) + phosphate = RNA(n) + a ribonucleoside 5'-diphosphate. Its function is as follows. Involved in mRNA degradation. Catalyzes the phosphorolysis of single-stranded polyribonucleotides processively in the 3'- to 5'-direction. This Borrelia turicatae (strain 91E135) protein is Polyribonucleotide nucleotidyltransferase.